The following is a 252-amino-acid chain: Indole-3-glycerol phosphate synthase (252 aa).

The protein belongs to the TrpC family.

The enzyme catalyses 1-(2-carboxyphenylamino)-1-deoxy-D-ribulose 5-phosphate + H(+) = (1S,2R)-1-C-(indol-3-yl)glycerol 3-phosphate + CO2 + H2O. Its pathway is amino-acid biosynthesis; L-tryptophan biosynthesis; L-tryptophan from chorismate: step 4/5. This chain is Indole-3-glycerol phosphate synthase, found in Listeria welshimeri serovar 6b (strain ATCC 35897 / DSM 20650 / CCUG 15529 / CIP 8149 / NCTC 11857 / SLCC 5334 / V8).